Consider the following 495-residue polypeptide: Ribosome biogenesis protein YTM1 (495 aa).

Residues 15-97 are ubiquitin-like (UBL) domain; sequence VKVIFTTTEP…ETTLTLQYVR (83 aa). WD repeat units follow at residues 129–168, 175–213, 223–262, 264–295, 296–337, 386–426, and 458–495; these read WSSA…IATS, GHTA…HFTG, GHTG…APEP, ASLL…LWSI, HTAP…STLT, GHAN…PATK, and GDGC…TEQK.

It belongs to the WD repeat WDR12/YTM1 family. As to quaternary structure, component of the NOP7 complex, composed of ERB1, NOP7 and YTM1. The complex is held together by ERB1, which interacts with NOP7 via its N-terminal domain and with YTM1 via a high-affinity interaction between the seven-bladed beta-propeller domains of the 2 proteins. The NOP7 complex associates with the 66S pre-ribosome. Interacts (via UBL domain) with MDN1 (via VWFA/MIDAS domain).

It is found in the nucleus. The protein localises to the nucleolus. It localises to the nucleoplasm. Functionally, component of the NOP7 complex, which is required for maturation of the 25S and 5.8S ribosomal RNAs and formation of the 60S ribosome. This chain is Ribosome biogenesis protein YTM1, found in Chaetomium thermophilum (strain DSM 1495 / CBS 144.50 / IMI 039719) (Thermochaetoides thermophila).